Consider the following 570-residue polypeptide: Probable metalloreductase AIM14 (570 aa).

7 helical membrane-spanning segments follow: residues 21 to 41, 70 to 90, 101 to 118, 142 to 162, 177 to 197, 204 to 224, and 230 to 250; these read IKYG…LALL, AIHL…HYSL, LGRL…LTLR, IITV…AIDD, FVGF…IGPM, LFYI…PIHS, and FPFL…RIVF. In terms of domain architecture, Ferric oxidoreductase spans 101-219; the sequence is LGRLSYALIP…NLVNVAFILL (119 aa). The FAD-binding FR-type domain maps to 250–388; sequence FAKSLMILNK…GGSGISFALP (139 aa). The disordered stretch occupies residues 480-507; the sequence is ISNFNSENADSNDKTPETSHSPTKENGS.

It belongs to the ferric reductase (FRE) family. AIM14 subfamily. In terms of assembly, interacts with ribosomes.

Its subcellular location is the membrane. In terms of biological role, probable cell surface metalloreductase. May be involved in iron or copper homeostasis. This Saccharomyces cerevisiae (strain JAY291) (Baker's yeast) protein is Probable metalloreductase AIM14 (AIM14).